A 286-amino-acid chain; its full sequence is Phosphatidylserine decarboxylase proenzyme (286 aa).

Catalysis depends on charge relay system; for autoendoproteolytic cleavage activity residues D90, H147, and S252. The Schiff-base intermediate with substrate; via pyruvic acid; for decarboxylase activity role is filled by S252. S252 bears the Pyruvic acid (Ser); by autocatalysis mark.

The protein belongs to the phosphatidylserine decarboxylase family. PSD-B subfamily. Prokaryotic type I sub-subfamily. Heterodimer of a large membrane-associated beta subunit and a small pyruvoyl-containing alpha subunit. Pyruvate serves as cofactor. Is synthesized initially as an inactive proenzyme. Formation of the active enzyme involves a self-maturation process in which the active site pyruvoyl group is generated from an internal serine residue via an autocatalytic post-translational modification. Two non-identical subunits are generated from the proenzyme in this reaction, and the pyruvate is formed at the N-terminus of the alpha chain, which is derived from the carboxyl end of the proenzyme. The autoendoproteolytic cleavage occurs by a canonical serine protease mechanism, in which the side chain hydroxyl group of the serine supplies its oxygen atom to form the C-terminus of the beta chain, while the remainder of the serine residue undergoes an oxidative deamination to produce ammonia and the pyruvoyl prosthetic group on the alpha chain. During this reaction, the Ser that is part of the protease active site of the proenzyme becomes the pyruvoyl prosthetic group, which constitutes an essential element of the active site of the mature decarboxylase.

The protein localises to the cell membrane. It carries out the reaction a 1,2-diacyl-sn-glycero-3-phospho-L-serine + H(+) = a 1,2-diacyl-sn-glycero-3-phosphoethanolamine + CO2. Its pathway is phospholipid metabolism; phosphatidylethanolamine biosynthesis; phosphatidylethanolamine from CDP-diacylglycerol: step 2/2. Its function is as follows. Catalyzes the formation of phosphatidylethanolamine (PtdEtn) from phosphatidylserine (PtdSer). This chain is Phosphatidylserine decarboxylase proenzyme, found in Pseudomonas fluorescens (strain Pf0-1).